Reading from the N-terminus, the 98-residue chain is Putative pterin-4-alpha-carbinolamine dehydratase (98 aa).

It belongs to the pterin-4-alpha-carbinolamine dehydratase family.

The catalysed reaction is (4aS,6R)-4a-hydroxy-L-erythro-5,6,7,8-tetrahydrobiopterin = (6R)-L-erythro-6,7-dihydrobiopterin + H2O. This chain is Putative pterin-4-alpha-carbinolamine dehydratase, found in Mesorhizobium japonicum (strain LMG 29417 / CECT 9101 / MAFF 303099) (Mesorhizobium loti (strain MAFF 303099)).